A 140-amino-acid chain; its full sequence is Nucleoside diphosphate kinase (140 aa).

ATP-binding residues include K11, F59, R87, T93, R104, and N114. H117 acts as the Pros-phosphohistidine intermediate in catalysis.

This sequence belongs to the NDK family. Homotetramer. Mg(2+) serves as cofactor.

Its subcellular location is the cytoplasm. The catalysed reaction is a 2'-deoxyribonucleoside 5'-diphosphate + ATP = a 2'-deoxyribonucleoside 5'-triphosphate + ADP. It catalyses the reaction a ribonucleoside 5'-diphosphate + ATP = a ribonucleoside 5'-triphosphate + ADP. In terms of biological role, major role in the synthesis of nucleoside triphosphates other than ATP. The ATP gamma phosphate is transferred to the NDP beta phosphate via a ping-pong mechanism, using a phosphorylated active-site intermediate. The polypeptide is Nucleoside diphosphate kinase (Xanthobacter autotrophicus (strain ATCC BAA-1158 / Py2)).